The sequence spans 497 residues: FAD-linked oxidoreductase fmqD (497 aa).

The N-terminal stretch at 1–17 (MQYIPFLISGLVPVALS) is a signal peptide. Residues 68 to 243 (NDPSYVATVK…TSATYRIYDQ (176 aa)) form the FAD-binding PCMH-type domain. N-linked (GlcNAc...) asparagine glycosylation is found at asparagine 99, asparagine 261, and asparagine 288.

Belongs to the oxygen-dependent FAD-linked oxidoreductase family.

The protein resides in the secreted. It is found in the cell wall. It functions in the pathway alkaloid biosynthesis. Functionally, FAD-linked oxidoreductase; part of the gene cluster that mediates the biosynthesis of the antitumor fumiquinazolines that confer a dual-usage capability to defend against phagocytes in the environment and animal hosts. The simplest member is fumiquinazoline F (FQF) with a 6-6-6 tricyclic core derived from anthranilic acid (Ant), tryptophan (Trp), and alanine (Ala). The trimodular NRPS fmqA is responsible for FQF formation. Modules 1, 2 and 3 of fmqA are predicted to activate and load Ant, Trp and Ala, respectively, providing for the assembly of an Ant-Trp-Ala-S-enzyme intermediate that would undergo double cyclization for chain release and generation of the tricyclic 6-6-6 product fumiquinazoline F. The presence of an E domain predicted for module 2 of fmqA is consistent with epimerization of L-Trp to D-Trp during assembly to generate the R-stereocenter at C14 of FQF. The FAD-dependent monooxygenase fmqB and the monomodular NRPS fmqC then maturate FQF to FQA. FmqB oxidizes the 2',3'-double bond of the indole side chain of FQF, and fmqC activates L-Ala as the adenylate, installs it as the pantetheinyl thioester on its carrier protein domain, and acylates the oxidized indole for subsequent intramolecular cyclization to create the 6-5-5-imidazolindolone of FQA. The FAD-linked oxidoreductase fmqD introduces a third layer of scaffold complexity by converting FQA to the spirohemiaminal FQC, presumably by catalyzing the formation of a transient imine within the pyrazinone ring. FQC subsequently converts nonenzymatically to the known cyclic aminal FQD. This is FAD-linked oxidoreductase fmqD from Aspergillus fumigatus (strain ATCC MYA-4609 / CBS 101355 / FGSC A1100 / Af293) (Neosartorya fumigata).